A 305-amino-acid polypeptide reads, in one-letter code: Protoheme IX farnesyltransferase (305 aa).

9 consecutive transmembrane segments (helical) span residues 31–51, 52–72, 96–118, 123–145, 151–171, 179–199, 225–245, 247–267, and 281–301; these read VISLVIFTGFVGMWLAPYSVH, PFIAGIAVVCIALGAGSAGAI, VIESDEALSFGLITGFFAVFFMA, LLASFLLLFTIFYYICIYTIWLK, NIVIGGVSGALPPVIGYAAVS, IILFLIIFIWTPPHSWALALF, ILIYSILLFIVSLMPFFIGMN, FIYLIIAGILGVVFLYYAGSL, and FAYSIFYLFFIFLLLYSTNTI.

The protein belongs to the UbiA prenyltransferase family. Protoheme IX farnesyltransferase subfamily.

Its subcellular location is the cell inner membrane. The enzyme catalyses heme b + (2E,6E)-farnesyl diphosphate + H2O = Fe(II)-heme o + diphosphate. Its pathway is porphyrin-containing compound metabolism; heme O biosynthesis; heme O from protoheme: step 1/1. Its function is as follows. Converts heme B (protoheme IX) to heme O by substitution of the vinyl group on carbon 2 of heme B porphyrin ring with a hydroxyethyl farnesyl side group. This Rickettsia massiliae (strain Mtu5) protein is Protoheme IX farnesyltransferase.